Here is a 261-residue protein sequence, read N- to C-terminus: G patch domain-containing protein 11 (261 aa).

3 disordered regions span residues 1–67 (MEEE…LNEA), 88–124 (ALGK…AEEN), and 184–213 (EAWY…LVEE). Basic and acidic residues-rich tracts occupy residues 29–64 (RVKE…DTKL) and 111–124 (IGHE…AEEN). Positions 31–65 (KECYEKEEKHKEANIKNRQQKLKDVEKEKRDTKLN) form a coiled coil. Residues 70–116 (NENKGFALLQKMGYKKGQALGKKGDGIVEPIPLNIKTGRSGIGHEEM) enclose the G-patch domain. Residues 190-222 (KMNEQEADEEADEETEEDEDLVEEELSTLEKLQ) adopt a coiled-coil conformation. Residues 194 to 213 (QEADEEADEETEEDEDLVEE) show a composition bias toward acidic residues.

The protein belongs to the GPATCH11 family.

The protein resides in the chromosome. Its subcellular location is the centromere. The protein localises to the kinetochore. This is G patch domain-containing protein 11 (gpatch11) from Xenopus tropicalis (Western clawed frog).